The following is a 349-amino-acid chain: Selenide, water dikinase (349 aa).

Sec19 is a catalytic residue. Residue Sec19 is a non-standard amino acid, selenocysteine. Residues Lys22 and 50–52 (LGD) contribute to the ATP site. Residue Asp53 participates in Mg(2+) binding. ATP is bound by residues Asp69, Asp92, and 140 to 142 (GHT). A Mg(2+)-binding site is contributed by Asp92. Mg(2+) is bound at residue Asp246.

Belongs to the selenophosphate synthase 1 family. Class I subfamily. Homodimer. Requires Mg(2+) as cofactor.

It carries out the reaction hydrogenselenide + ATP + H2O = selenophosphate + AMP + phosphate + 2 H(+). Its function is as follows. Synthesizes selenophosphate from selenide and ATP. This Methanocaldococcus jannaschii (strain ATCC 43067 / DSM 2661 / JAL-1 / JCM 10045 / NBRC 100440) (Methanococcus jannaschii) protein is Selenide, water dikinase.